The following is a 304-amino-acid chain: Ribosome-inactivating protein 9 (304 aa).

E208 is an active-site residue.

The protein belongs to the ribosome-inactivating protein family. Type 1 RIP subfamily. As to quaternary structure, monomer. Accumulates to high levels in seeds.

Its subcellular location is the cytoplasm. The catalysed reaction is Endohydrolysis of the N-glycosidic bond at one specific adenosine on the 28S rRNA.. Functionally, possesses features of some constitutive defense agent. The coordinate Opaque-2-controlled synthesis of this protein and the major seed storage proteins (zeins) may provide the germinating seedling with both nutritional benefits and protection against pathogen invasion of the surrounding endosperm. This chain is Ribosome-inactivating protein 9 (CRIP9), found in Zea mays (Maize).